The sequence spans 272 residues: UPF0759 protein YecE (272 aa).

The protein belongs to the UPF0759 family.

This is UPF0759 protein YecE (yecE) from Escherichia coli (strain K12).